The following is a 714-amino-acid chain: Fatty acid oxidation complex subunit alpha (714 aa).

Positions 1–190 (MDTVSAFKLE…KAGLVDEVVP (190 aa)) are enoyl-CoA hydratase. Residues 306–714 (GPLTSIAVLG…TFWPADERLT (409 aa)) form a 3-hydroxyacyl-CoA dehydrogenase region.

The protein in the N-terminal section; belongs to the enoyl-CoA hydratase/isomerase family. In the central section; belongs to the 3-hydroxyacyl-CoA dehydrogenase family. Heterotetramer of two alpha chains (FadJ) and two beta chains (FadI).

It localises to the cytoplasm. It catalyses the reaction a (3S)-3-hydroxyacyl-CoA = a (2E)-enoyl-CoA + H2O. It carries out the reaction a 4-saturated-(3S)-3-hydroxyacyl-CoA = a (3E)-enoyl-CoA + H2O. The catalysed reaction is a (3S)-3-hydroxyacyl-CoA + NAD(+) = a 3-oxoacyl-CoA + NADH + H(+). The enzyme catalyses (3S)-3-hydroxybutanoyl-CoA = (3R)-3-hydroxybutanoyl-CoA. It functions in the pathway lipid metabolism; fatty acid beta-oxidation. In terms of biological role, catalyzes the formation of a hydroxyacyl-CoA by addition of water on enoyl-CoA. Also exhibits 3-hydroxyacyl-CoA epimerase and 3-hydroxyacyl-CoA dehydrogenase activities. The chain is Fatty acid oxidation complex subunit alpha from Klebsiella pneumoniae (strain 342).